We begin with the raw amino-acid sequence, 393 residues long: Beta-1,4-galactosyltransferase 3 (393 aa).

The Cytoplasmic segment spans residues 1 to 10 (MLRRLLERPC). A helical; Signal-anchor for type II membrane protein transmembrane segment spans residues 11–31 (TLALLVGSQLAVMMYLSLGGF). Topologically, residues 32–393 (RSLSALFGRD…ANHTALRGSH (362 aa)) are lumenal. N57 carries N-linked (GlcNAc...) asparagine glycosylation. C77 and C119 form a disulfide bridge. A UDP-alpha-D-galactose-binding site is contributed by 130–134 (PHRAR). N-linked (GlcNAc...) asparagine glycosylation occurs at N166. UDP-alpha-D-galactose-binding positions include 169 to 171 (FNR), 196 to 197 (VD), Y226, and W258. An intrachain disulfide couples C190 to C209. D197 serves as a coordination point for Mn(2+). 260–263 (GEDD) contributes to the N-acetyl-D-glucosamine binding site. H291 is a Mn(2+) binding site. 291-293 (HRG) is a binding site for UDP-alpha-D-galactose. Position 303 (R303) interacts with N-acetyl-D-glucosamine. N-linked (GlcNAc...) asparagine glycosylation is found at N337 and N385. The disordered stretch occupies residues 339–393 (TADIGTDPRGPRAPSGPRYPPGSSQAFRQEMLQRRPPARPGPLSTANHTALRGSH).

It belongs to the glycosyltransferase 7 family. It depends on Mn(2+) as a cofactor. In terms of tissue distribution, found in various tissues. Highest expression in placenta, prostate, testis, ovary, intestine and muscle, and in fetal brain.

The protein resides in the golgi apparatus. It localises to the golgi stack membrane. It carries out the reaction an N-acetyl-beta-D-glucosaminyl derivative + UDP-alpha-D-galactose = a beta-D-galactosyl-(1-&gt;4)-N-acetyl-beta-D-glucosaminyl derivative + UDP + H(+). It catalyses the reaction N-acetyl-D-glucosamine + UDP-alpha-D-galactose = beta-D-galactosyl-(1-&gt;4)-N-acetyl-D-glucosamine + UDP + H(+). The enzyme catalyses a beta-D-GlcNAc-(1-&gt;3)-beta-D-Gal-(1-&gt;4)-beta-D-Glc-(1&lt;-&gt;1)-Cer(d18:1(4E)) + UDP-alpha-D-galactose = a neolactoside nLc4Cer(d18:1(4E)) + UDP + H(+). The catalysed reaction is a beta-D-glucosylceramide + UDP-alpha-D-galactose = a beta-D-galactosyl-(1-&gt;4)-beta-D-glucosyl-(1&lt;-&gt;1)-ceramide + UDP + H(+). It carries out the reaction a neolactoside IV(3)-beta-GlcNAc-nLc4Cer + UDP-alpha-D-galactose = a neolactoside nLc6Cer + UDP + H(+). The protein operates within protein modification; protein glycosylation. In terms of biological role, responsible for the synthesis of complex-type N-linked oligosaccharides in many glycoproteins as well as the carbohydrate moieties of glycolipids. The chain is Beta-1,4-galactosyltransferase 3 from Homo sapiens (Human).